Reading from the N-terminus, the 625-residue chain is MAU2 chromatid cohesion factor homolog (625 aa).

3 TPR repeats span residues 96–129 (FDTA…SQNN), 451–484 (GGFY…ANAE), and 491–524 (SCSL…ASKI). A compositionally biased stretch (polar residues) spans 600–611 (TVPTTETSTSAL). Positions 600 to 625 (TVPTTETSTSALQQPQQPAAQFGQFY) are disordered. The span at 612-625 (QQPQQPAAQFGQFY) shows a compositional bias: low complexity.

It belongs to the SCC4/mau-2 family. As to quaternary structure, interacts with Nipped-B to form the cohesin loading complex.

Its subcellular location is the nucleus. It is found in the nucleoplasm. Functionally, required for association of the cohesin complex with chromatin during interphase. Plays a role in sister chromatid cohesion and normal progression through prometaphase. This Drosophila mojavensis (Fruit fly) protein is MAU2 chromatid cohesion factor homolog.